A 452-amino-acid chain; its full sequence is MERRIFGLETEYGVTCTYRGQRRLSPDEVARYLFRRVVSWGRSSNVFLRNGARLYLDVGSHPEYATPECDSVADLVAHDRAGERILEGLLVDAEKRLHDEGIAGEIYLFKNNTDSAGNSYGCHENYLVSRHGEFGRLADVLIPFLVTRQLICGAGKVLQTPRGAVYCLSQRAEHIWEGVSSATTRSRPIINTRDEPHADAERYRRLHVIVGDSNMNEVTTLLKVGAADIVLRMIESGVVMRDLTLENPIRAIREVSHDITGRRKVRLASGKEISALEIQQEYLAKATEFVERRGGDQTAKRVVELWGRVLRAVETGDLDPVAREIDWVTKLRLIERYQGKHDLPLSHPRVAQMDLAYHDLRRGRGLYGLLERRGQVDRAATDPEIFEAKETPPQTTRARLRGEFIRHAQEKRRDFTVDWVHLKLNDQAQRTVLCKDPFRAYDERVERLIASM.

E9 lines the Mg(2+) pocket. R53 contacts ATP. Y55 is a Mg(2+) binding site. D57 acts as the Proton acceptor in catalysis. Mg(2+) is bound at residue E63. Residues T66 and W419 each coordinate ATP.

The protein belongs to the Pup ligase/Pup deamidase family. Pup-conjugating enzyme subfamily.

The enzyme catalyses ATP + [prokaryotic ubiquitin-like protein]-L-glutamate + [protein]-L-lysine = ADP + phosphate + N(6)-([prokaryotic ubiquitin-like protein]-gamma-L-glutamyl)-[protein]-L-lysine.. It functions in the pathway protein degradation; proteasomal Pup-dependent pathway. It participates in protein modification; protein pupylation. Functionally, catalyzes the covalent attachment of the prokaryotic ubiquitin-like protein modifier Pup to the proteasomal substrate proteins, thereby targeting them for proteasomal degradation. This tagging system is termed pupylation. The ligation reaction involves the side-chain carboxylate of the C-terminal glutamate of Pup and the side-chain amino group of a substrate lysine. In Salinispora arenicola (strain CNS-205), this protein is Pup--protein ligase.